Consider the following 108-residue polypeptide: Anthranilate 1,2-dioxygenase ferredoxin subunit (108 aa).

A Rieske domain is found at 9–105 (WHPLGAIDEF…IRIVDGQVEV (97 aa)). [2Fe-2S] cluster-binding residues include Cys49, His51, Cys68, and His71.

It belongs to the bacterial ring-hydroxylating dioxygenase ferredoxin component family. As to quaternary structure, part of a multicomponent enzyme system composed of a reductase (AndAa), a ferredoxin (AndAb) and a two-subunit oxygenase component (AndAc and AndAd). The cofactor is [2Fe-2S] cluster.

It participates in aromatic compound metabolism; anthranilate degradation via hydroxylation; catechol from anthranilate: step 1/1. Its function is as follows. Part of the multicomponent anthranilate dioxygenase, that converts anthranilate to catechol. This protein seems to be a 2Fe-2S ferredoxin. This is Anthranilate 1,2-dioxygenase ferredoxin subunit from Burkholderia cepacia (Pseudomonas cepacia).